Here is an 859-residue protein sequence, read N- to C-terminus: Collagen alpha-1(II) chain (859 aa).

A disordered region spans residues 1–607; it reads LQGLPGKDGE…LGQTEKGPDP (607 aa). Residues proline 31 and proline 40 each carry the 4-hydroxyproline modification. Proline 42 bears the 3-hydroxyproline mark. Residues proline 43 and proline 46 each carry the 4-hydroxyproline modification. Low complexity predominate over residues 78–121; it reads ERGSPGAQGLQGPRGLPGTPGTDGPKGATGPAGPNGAQGPPGLQ. A compositionally biased stretch (basic and acidic residues) spans 136–147; the sequence is KGDRGDVGEKGP. 2 stretches are compositionally biased toward low complexity: residues 204–220 and 249–277; these read PAGF…PGAK and PTGV…AGRV. Proline 279 carries the 3-hydroxyproline modification. A compositionally biased stretch (pro residues) spans 279-292; the sequence is PPGPNGNPGPPGPP. 4-hydroxyproline is present on residues proline 280, proline 286, and proline 292. The span at 306–321 shows a compositional bias: low complexity; it reads DAGPPGRAGDPGLQGP. Positions 487 to 501 are enriched in basic and acidic residues; it reads RGDKGETGEAGERGL. The interval 491 to 586 is triple-helical region; sequence GETGEAGERG…PGPPGPPGPP (96 aa). Proline 516 carries the 3-hydroxyproline modification. Positions 520-529 are enriched in low complexity; the sequence is SGDQGAAGPA. Proline 553 carries the 4-hydroxyproline modification. Proline 558 carries the 3-hydroxyproline modification. Proline 559 carries the 4-hydroxyproline modification. The segment covering 570 to 586 has biased composition (pro residues); it reads PAGPPGNPGPPGPPGPP. Proline 573 bears the 3-hydroxyproline mark. Proline 574 and proline 577 each carry 4-hydroxyproline. The residue at position 579 (proline 579) is a 3-hydroxyproline. A 4-hydroxyproline mark is found at proline 580 and proline 583. Proline 585 carries the post-translational modification 3-hydroxyproline. Proline 586 carries the post-translational modification 4-hydroxyproline. A nonhelical region (C-terminal) region spans residues 587–613; sequence GTGIDMSAFAGLGQTEKGPDPIRYMRA. Positions 614 to 859 are cleaved as a propeptide — C-terminal propeptide; the sequence is DEAAGGLRQH…GVDIGPVCFL (246 aa). Positions 625 to 859 constitute a Fibrillar collagen NC1 domain; that stretch reads VEVDATLKSL…GVDIGPVCFL (235 aa). 3 disulfides stabilise this stretch: cysteine 655/cysteine 687, cysteine 695/cysteine 857, and cysteine 765/cysteine 810. Ca(2+) is bound by residues aspartate 673, asparagine 675, glutamine 676, cysteine 678, and aspartate 681. N-linked (GlcNAc...) asparagine glycosylation occurs at asparagine 760.

It belongs to the fibrillar collagen family. In terms of assembly, homotrimers of alpha 1(II) chains. Contains mostly 4-hydroxyproline. Prolines at the third position of the tripeptide repeating unit (G-X-P) are 4-hydroxylated in some or all of the chains. In terms of processing, contains 3-hydroxyproline at a few sites. This modification occurs on the first proline residue in the sequence motif Gly-Pro-Hyp, where Hyp is 4-hydroxyproline. Post-translationally, lysine residues at the third position of the tripeptide repeating unit (G-X-Y) are 5-hydroxylated in some or all of the chains. O-glycosylated on hydroxylated lysine residues. The O-linked glycan consists of a Glc-Gal disaccharide.

It is found in the secreted. It localises to the extracellular space. The protein resides in the extracellular matrix. Functionally, type II collagen is specific for cartilaginous tissues. It is essential for the normal embryonic development of the skeleton, for linear growth and for the ability of cartilage to resist compressive forces. This is Collagen alpha-1(II) chain from Gallus gallus (Chicken).